A 349-amino-acid polypeptide reads, in one-letter code: GTP 3',8-cyclase (349 aa).

The Radical SAM core domain occupies 26–245; the sequence is GFGRAVTYLR…SSFWTLTDIP (220 aa). Residue arginine 35 coordinates GTP. [4Fe-4S] cluster is bound by residues cysteine 42 and cysteine 46. Tyrosine 48 is a binding site for S-adenosyl-L-methionine. Cysteine 49 contributes to the [4Fe-4S] cluster binding site. A GTP-binding site is contributed by arginine 84. Glycine 88 contributes to the S-adenosyl-L-methionine binding site. Threonine 118 is a binding site for GTP. Serine 142 is an S-adenosyl-L-methionine binding site. Residue lysine 178 participates in GTP binding. An S-adenosyl-L-methionine-binding site is contributed by methionine 212. 2 residues coordinate [4Fe-4S] cluster: cysteine 275 and cysteine 278. GTP is bound at residue 280-282; that stretch reads RVR. Cysteine 292 contributes to the [4Fe-4S] cluster binding site.

Belongs to the radical SAM superfamily. MoaA family. As to quaternary structure, monomer and homodimer. [4Fe-4S] cluster serves as cofactor.

The catalysed reaction is GTP + AH2 + S-adenosyl-L-methionine = (8S)-3',8-cyclo-7,8-dihydroguanosine 5'-triphosphate + 5'-deoxyadenosine + L-methionine + A + H(+). The protein operates within cofactor biosynthesis; molybdopterin biosynthesis. Its function is as follows. Catalyzes the cyclization of GTP to (8S)-3',8-cyclo-7,8-dihydroguanosine 5'-triphosphate. This is GTP 3',8-cyclase from Caulobacter vibrioides (strain ATCC 19089 / CIP 103742 / CB 15) (Caulobacter crescentus).